The sequence spans 383 residues: NifS-like protein (383 aa).

Residues 58-59 (SE) and 184-186 (SLN) contribute to the pyridoxal 5'-phosphate site.

This sequence belongs to the class-V pyridoxal-phosphate-dependent aminotransferase family. NifS/IscS subfamily. Pyridoxal 5'-phosphate serves as cofactor.

The protein resides in the virion. This chain is NifS-like protein, found in African swine fever virus (isolate Pig/Kenya/KEN-50/1950) (ASFV).